The primary structure comprises 420 residues: Sulfate adenylyltransferase (420 aa).

N-acetylalanine is present on A2.

It belongs to the sulfate adenylyltransferase family. It depends on Mg(2+) as a cofactor.

It carries out the reaction sulfate + ATP + H(+) = adenosine 5'-phosphosulfate + diphosphate. Its pathway is sulfur metabolism; hydrogen sulfide biosynthesis; sulfite from sulfate: step 1/3. Its activity is regulated as follows. Inhibited by adenosine 5'-phosphosulfate (APS), but not by 3'phosphoadenosine 5'-phosphosulfate (PAPS). Inhibited by AMP, ADP, CTP, GTP, ITP, UTP and anions other than those in group IV. This Pyropia yezoensis (Susabi-nori) protein is Sulfate adenylyltransferase.